A 481-amino-acid polypeptide reads, in one-letter code: UDP-N-acetylmuramate--L-alanine ligase (481 aa).

126 to 132 (GTHGKTT) provides a ligand contact to ATP.

This sequence belongs to the MurCDEF family.

The protein resides in the cytoplasm. It carries out the reaction UDP-N-acetyl-alpha-D-muramate + L-alanine + ATP = UDP-N-acetyl-alpha-D-muramoyl-L-alanine + ADP + phosphate + H(+). Its pathway is cell wall biogenesis; peptidoglycan biosynthesis. Its function is as follows. Cell wall formation. This chain is UDP-N-acetylmuramate--L-alanine ligase, found in Marinobacter nauticus (strain ATCC 700491 / DSM 11845 / VT8) (Marinobacter aquaeolei).